We begin with the raw amino-acid sequence, 117 residues long: Large ribosomal subunit protein uL18 (117 aa).

Belongs to the universal ribosomal protein uL18 family. Part of the 50S ribosomal subunit; part of the 5S rRNA/L5/L18/L25 subcomplex. Contacts the 5S and 23S rRNAs.

Its function is as follows. This is one of the proteins that bind and probably mediate the attachment of the 5S RNA into the large ribosomal subunit, where it forms part of the central protuberance. This chain is Large ribosomal subunit protein uL18, found in Thioalkalivibrio sulfidiphilus (strain HL-EbGR7).